A 495-amino-acid chain; its full sequence is UDP-N-acetylmuramoyl-L-alanyl-D-glutamate--2,6-diaminopimelate ligase (495 aa).

Ser-29 provides a ligand contact to UDP-N-acetyl-alpha-D-muramoyl-L-alanyl-D-glutamate. An ATP-binding site is contributed by 111-117; the sequence is GTNGKTS. UDP-N-acetyl-alpha-D-muramoyl-L-alanyl-D-glutamate contacts are provided by residues 153–154, Ser-180, Gln-186, and Arg-188; that span reads TT. An N6-carboxylysine modification is found at Lys-220. Residues Arg-384, 408–411, Gly-459, and Glu-463 each bind meso-2,6-diaminopimelate; that span reads DNPR. The Meso-diaminopimelate recognition motif signature appears at 408-411; the sequence is DNPR.

The protein belongs to the MurCDEF family. MurE subfamily. Requires Mg(2+) as cofactor. Post-translationally, carboxylation is probably crucial for Mg(2+) binding and, consequently, for the gamma-phosphate positioning of ATP.

The protein resides in the cytoplasm. The enzyme catalyses UDP-N-acetyl-alpha-D-muramoyl-L-alanyl-D-glutamate + meso-2,6-diaminopimelate + ATP = UDP-N-acetyl-alpha-D-muramoyl-L-alanyl-gamma-D-glutamyl-meso-2,6-diaminopimelate + ADP + phosphate + H(+). The protein operates within cell wall biogenesis; peptidoglycan biosynthesis. Functionally, catalyzes the addition of meso-diaminopimelic acid to the nucleotide precursor UDP-N-acetylmuramoyl-L-alanyl-D-glutamate (UMAG) in the biosynthesis of bacterial cell-wall peptidoglycan. The sequence is that of UDP-N-acetylmuramoyl-L-alanyl-D-glutamate--2,6-diaminopimelate ligase from Xylella fastidiosa (strain Temecula1 / ATCC 700964).